The primary structure comprises 206 residues: Small ribosomal subunit protein uS4 (206 aa).

The region spanning 96-156 is the S4 RNA-binding domain; that stretch reads CRLDNVVYRM…EKSKNQLRIA (61 aa).

The protein belongs to the universal ribosomal protein uS4 family. Part of the 30S ribosomal subunit. Contacts protein S5. The interaction surface between S4 and S5 is involved in control of translational fidelity.

In terms of biological role, one of the primary rRNA binding proteins, it binds directly to 16S rRNA where it nucleates assembly of the body of the 30S subunit. Its function is as follows. With S5 and S12 plays an important role in translational accuracy. In Ectopseudomonas mendocina (strain ymp) (Pseudomonas mendocina), this protein is Small ribosomal subunit protein uS4.